The following is a 253-amino-acid chain: 3-deoxy-manno-octulosonate cytidylyltransferase (253 aa).

Belongs to the KdsB family.

It is found in the cytoplasm. The enzyme catalyses 3-deoxy-alpha-D-manno-oct-2-ulosonate + CTP = CMP-3-deoxy-beta-D-manno-octulosonate + diphosphate. The protein operates within nucleotide-sugar biosynthesis; CMP-3-deoxy-D-manno-octulosonate biosynthesis; CMP-3-deoxy-D-manno-octulosonate from 3-deoxy-D-manno-octulosonate and CTP: step 1/1. It functions in the pathway bacterial outer membrane biogenesis; lipopolysaccharide biosynthesis. Its function is as follows. Activates KDO (a required 8-carbon sugar) for incorporation into bacterial lipopolysaccharide in Gram-negative bacteria. The sequence is that of 3-deoxy-manno-octulosonate cytidylyltransferase from Edwardsiella ictaluri (strain 93-146).